A 389-amino-acid chain; its full sequence is MVSVAEIRQAQRAEGPATILAIGTANPPNRVDQSTYPDYYFRITNSDHMTELKEKFQRMCDKSMIKTRYMYLNEEILKENPNMCAYMAPSLDARQDMVVVEVPKLGKEAAVKAIKEWGQPKSKITHLIFCTTSGVDMPGADYQLTKQLGLRPYVKRYMMYQQGCFAGGTVLRLAKDLAENNKGARVLVVCSEITAVTFRGPSDTHLDSLVGQALFGDGAAAVIVGSDPIPQVEKPLYELVWTAQTIAPDSEGAIDGHLREVGLTFHLLKDVPGIVSKNIDKALFEAFNPLNISDYNSIFWIAHPGGPAILDQVEQKLGLKPEKMKATRDVLSEYGNMSSACVLFILDEMRRKSAENGHKTTGEGLEWGVLFGFGPGLTIETVVLHSVAI.

C164 is a catalytic residue.

Belongs to the thiolase-like superfamily. Chalcone/stilbene synthases family.

The catalysed reaction is (E)-4-coumaroyl-CoA + 3 malonyl-CoA + 3 H(+) = 2',4,4',6'-tetrahydroxychalcone + 3 CO2 + 4 CoA. It functions in the pathway secondary metabolite biosynthesis; flavonoid biosynthesis. The primary product of this enzyme is 4,2',4',6'-tetrahydroxychalcone (also termed naringenin-chalcone or chalcone) which can under specific conditions spontaneously isomerize into naringenin. In Glycine max (Soybean), this protein is Chalcone synthase 7 (CHS7).